A 319-amino-acid chain; its full sequence is Methionyl-tRNA formyltransferase (319 aa).

116–119 contacts (6S)-5,6,7,8-tetrahydrofolate; it reads SLLP.

This sequence belongs to the Fmt family.

It catalyses the reaction L-methionyl-tRNA(fMet) + (6R)-10-formyltetrahydrofolate = N-formyl-L-methionyl-tRNA(fMet) + (6S)-5,6,7,8-tetrahydrofolate + H(+). Functionally, attaches a formyl group to the free amino group of methionyl-tRNA(fMet). The formyl group appears to play a dual role in the initiator identity of N-formylmethionyl-tRNA by promoting its recognition by IF2 and preventing the misappropriation of this tRNA by the elongation apparatus. The sequence is that of Methionyl-tRNA formyltransferase from Chlorobium phaeovibrioides (strain DSM 265 / 1930) (Prosthecochloris vibrioformis (strain DSM 265)).